We begin with the raw amino-acid sequence, 164 residues long: Phosphopantetheine adenylyltransferase (164 aa).

Serine 9 contacts substrate. Residues 9–10 (SF) and histidine 17 contribute to the ATP site. The substrate site is built by lysine 41, leucine 73, and lysine 87. ATP is bound by residues 88–90 (GLR), glutamate 98, and 122–128 (YSYLSSS).

It belongs to the bacterial CoaD family. In terms of assembly, homohexamer. Mg(2+) is required as a cofactor.

It localises to the cytoplasm. The catalysed reaction is (R)-4'-phosphopantetheine + ATP + H(+) = 3'-dephospho-CoA + diphosphate. The protein operates within cofactor biosynthesis; coenzyme A biosynthesis; CoA from (R)-pantothenate: step 4/5. In terms of biological role, reversibly transfers an adenylyl group from ATP to 4'-phosphopantetheine, yielding dephospho-CoA (dPCoA) and pyrophosphate. The protein is Phosphopantetheine adenylyltransferase of Rhodococcus opacus (strain B4).